A 486-amino-acid polypeptide reads, in one-letter code: 2-hydroxymuconic semialdehyde dehydrogenase (486 aa).

Active-site residues include glutamate 254 and cysteine 288.

This sequence belongs to the aldehyde dehydrogenase family.

The enzyme catalyses (2Z,4E)-2-hydroxy-6-oxohexa-2,4-dienoate + NAD(+) + H2O = (2Z,4E)-2-hydroxyhexa-2,4-dienedioate + NADH + 2 H(+). Its pathway is aromatic compound metabolism; benzoate degradation via hydroxylation. Its function is as follows. 2-hydroxymuconic acid semialdehyde can be converted to 2-hydroxypent-2,4-dienoate either directly by the action of 2-hydroxymuconic semialdehyde hydrolase (HMSH) or by the action of three sequential enzymes, the first of which is HMSD. In Pseudomonas sp. (strain CF600), this protein is 2-hydroxymuconic semialdehyde dehydrogenase (dmpC).